The chain runs to 952 residues: 2-oxoglutarate dehydrogenase E1 component (952 aa).

It belongs to the alpha-ketoglutarate dehydrogenase family. As to quaternary structure, homodimer. Part of the 2-oxoglutarate dehydrogenase (OGDH) complex composed of E1 (2-oxoglutarate dehydrogenase), E2 (dihydrolipoamide succinyltransferase) and E3 (dihydrolipoamide dehydrogenase); the complex contains multiple copies of the three enzymatic components (E1, E2 and E3). Thiamine diphosphate serves as cofactor.

It catalyses the reaction N(6)-[(R)-lipoyl]-L-lysyl-[protein] + 2-oxoglutarate + H(+) = N(6)-[(R)-S(8)-succinyldihydrolipoyl]-L-lysyl-[protein] + CO2. Functionally, E1 component of the 2-oxoglutarate dehydrogenase (OGDH) complex which catalyzes the decarboxylation of 2-oxoglutarate, the first step in the conversion of 2-oxoglutarate to succinyl-CoA and CO(2). This is 2-oxoglutarate dehydrogenase E1 component from Geobacillus sp. (strain WCH70).